We begin with the raw amino-acid sequence, 305 residues long: LysM and putative peptidoglycan-binding domain-containing protein 3 (305 aa).

The Extracellular segment spans residues 1–221 (MTGRNQHNGF…PYYGADWGMR (221 aa)). N-linked (GlcNAc...) asparagine glycosylation is present at Asn29. The tract at residues 31-60 (SETEYSEEDGEAFELRSRGRERHHRSTSRD) is disordered. The LysM domain occupies 68 to 112 (LIREIKEGDTLISISLQYFCTVADIKRANNLLTEQDFFALRSLRI). Positions 121–144 (TETHNTAPHKSSSPSGTCRITETP) are enriched in polar residues. The interval 121–156 (TETHNTAPHKSSSPSGTCRITETPVSGASLDSTSSS) is disordered. Residues 146-156 (SGASLDSTSSS) show a composition bias toward low complexity. The helical transmembrane segment at 222 to 242 (WWTAVAIMLVVGIVTPVFYLL) threads the bilayer. The Cytoplasmic segment spans residues 243–305 (YYEVLMKADV…QHHVKHQEET (63 aa)).

It is found in the cell membrane. It localises to the golgi apparatus. In terms of biological role, essential for Golgi structural integrity. This chain is LysM and putative peptidoglycan-binding domain-containing protein 3 (lysmd3), found in Danio rerio (Zebrafish).